Reading from the N-terminus, the 359-residue chain is Glycerol-1-phosphate dehydrogenase [NAD(P)+] (359 aa).

NAD(+) is bound by residues 107–111 and 129–132; these read GRVID and TAAS. Substrate is bound at residue Asp-134. NAD(+) is bound at residue Ser-138. Asp-181 is a binding site for substrate. The Zn(2+) site is built by Asp-181 and His-261. His-265 lines the substrate pocket. A Zn(2+)-binding site is contributed by His-277.

The protein belongs to the glycerol-1-phosphate dehydrogenase family. It depends on Zn(2+) as a cofactor.

Its subcellular location is the cytoplasm. The enzyme catalyses sn-glycerol 1-phosphate + NAD(+) = dihydroxyacetone phosphate + NADH + H(+). It catalyses the reaction sn-glycerol 1-phosphate + NADP(+) = dihydroxyacetone phosphate + NADPH + H(+). Its pathway is membrane lipid metabolism; glycerophospholipid metabolism. Catalyzes the NAD(P)H-dependent reduction of dihydroxyacetonephosphate (DHAP or glycerone phosphate) to glycerol 1-phosphate (G1P). The G1P thus generated is used as the glycerophosphate backbone of phospholipids in the cellular membranes of Archaea. The protein is Glycerol-1-phosphate dehydrogenase [NAD(P)+] of Methanospirillum hungatei JF-1 (strain ATCC 27890 / DSM 864 / NBRC 100397 / JF-1).